The following is a 518-amino-acid chain: Glutamate--cysteine ligase (518 aa).

Belongs to the glutamate--cysteine ligase type 1 family. Type 1 subfamily.

The catalysed reaction is L-cysteine + L-glutamate + ATP = gamma-L-glutamyl-L-cysteine + ADP + phosphate + H(+). It functions in the pathway sulfur metabolism; glutathione biosynthesis; glutathione from L-cysteine and L-glutamate: step 1/2. This Klebsiella pneumoniae (strain 342) protein is Glutamate--cysteine ligase.